Consider the following 603-residue polypeptide: UvrABC system protein C (603 aa).

The GIY-YIG domain occupies 17-94 (TTSGCYKMLN…IKTHKPDYNV (78 aa)).

The protein belongs to the UvrC family. In terms of assembly, interacts with UvrB in an incision complex.

It is found in the cytoplasm. Functionally, the UvrABC repair system catalyzes the recognition and processing of DNA lesions. UvrC both incises the 5' and 3' sides of the lesion. The N-terminal half is responsible for the 3' incision and the C-terminal half is responsible for the 5' incision. The chain is UvrABC system protein C from Borreliella burgdorferi (strain ATCC 35210 / DSM 4680 / CIP 102532 / B31) (Borrelia burgdorferi).